Consider the following 362-residue polypeptide: MDLHLFDYSEPGNFSDISWPCNSSDCIVVDTVMCPNMPNKSVLLYTLSFIYIFIFVIGMIANSVVVWVNIQAKTTGYDTHCYILNLAIADLWVVLTIPVWVVSLVQHNQWPMGELTCKVTHLIFSINLFGSIFFLTCMSVDRYLSITYFTNTPSSRKKMVRRVVCILVWLLAFCVSLPDTYYLKTVTSASNNETYCRSFYPEHSIKEWLIGMELVSVVLGFAVPFSIIAVFYFLLARAISASSDQEKHSSRKIIFSYVVVFLVCWLPYHVAVLLDIFSILHYIPFTCRLEHALFTALHVTQCLSLVHCCVNPVLYSFINRNYRYELMKAFIFKYSAKTGLTKLIDASRVSETEYSALEQSTK.

Residues 1-40 (MDLHLFDYSEPGNFSDISWPCNSSDCIVVDTVMCPNMPNK) are Extracellular-facing. N-linked (GlcNAc...) asparagine glycosylation is found at Asn-13, Asn-22, and Asn-39. Residues 41 to 61 (SVLLYTLSFIYIFIFVIGMIA) form a helical membrane-spanning segment. The Cytoplasmic segment spans residues 62–81 (NSVVVWVNIQAKTTGYDTHC). The helical transmembrane segment at 82–102 (YILNLAIADLWVVLTIPVWVV) threads the bilayer. At 103 to 118 (SLVQHNQWPMGELTCK) the chain is on the extracellular side. Cys-117 and Cys-196 form a disulfide bridge. Residues 119–139 (VTHLIFSINLFGSIFFLTCMS) form a helical membrane-spanning segment. At 140-162 (VDRYLSITYFTNTPSSRKKMVRR) the chain is on the cytoplasmic side. A helical membrane pass occupies residues 163–183 (VVCILVWLLAFCVSLPDTYYL). Topologically, residues 184 to 213 (KTVTSASNNETYCRSFYPEHSIKEWLIGME) are extracellular. The chain crosses the membrane as a helical span at residues 214-234 (LVSVVLGFAVPFSIIAVFYFL). Topologically, residues 235 to 252 (LARAISASSDQEKHSSRK) are cytoplasmic. Residues 253 to 273 (IIFSYVVVFLVCWLPYHVAVL) form a helical membrane-spanning segment. Topologically, residues 274–296 (LDIFSILHYIPFTCRLEHALFTA) are extracellular. The chain crosses the membrane as a helical span at residues 297-319 (LHVTQCLSLVHCCVNPVLYSFIN). The Cytoplasmic portion of the chain corresponds to 320-362 (RNYRYELMKAFIFKYSAKTGLTKLIDASRVSETEYSALEQSTK). The tract at residues 324 to 362 (YELMKAFIFKYSAKTGLTKLIDASRVSETEYSALEQSTK) is C-terminal cytoplasmic tail. A phosphoserine mark is found at Ser-347, Ser-350, and Ser-355.

It belongs to the G-protein coupled receptor 1 family. Atypical chemokine receptor subfamily. In terms of assembly, homodimer. Can form heterodimers with CXCR4; heterodimerization may regulate CXCR4 signaling activity. Interacts with ARRB1 and ARRB2. In terms of processing, the Ser/Thr residues in the C-terminal cytoplasmic tail may be phosphorylated. Ubiquitinated at the Lys residues in its C-terminal cytoplasmic tail and is essential for correct trafficking from and to the cell membrane. Deubiquitinated by CXCL12-stimulation in a reversible manner. As to expression, expressed in monocytes, basophils, B-cells, umbilical vein endothelial cells (HUVEC) and B-lymphoblastoid cells. Lower expression detected in CD4+ T-lymphocytes and natural killer cells. In the brain, detected in endothelial cells and capillaries, and in mature neurons of the frontal cortex and hippocampus. Expressed in tubular formation in the kidney. Highly expressed in astroglial tumor endothelial, microglial and glioma cells. Expressed at low levels in normal CD34+ progenitor cells, but at very high levels in several myeloid malignant cell lines. Expressed in breast carcinomas but not in normal breast tissue (at protein level).

It is found in the cell membrane. Its subcellular location is the early endosome. It localises to the recycling endosome. Atypical chemokine receptor that controls chemokine levels and localization via high-affinity chemokine binding that is uncoupled from classic ligand-driven signal transduction cascades, resulting instead in chemokine sequestration, degradation, or transcytosis. Also known as interceptor (internalizing receptor) or chemokine-scavenging receptor or chemokine decoy receptor. Acts as a receptor for chemokines CXCL11 and CXCL12/SDF1. Chemokine binding does not activate G-protein-mediated signal transduction but instead induces beta-arrestin recruitment, leading to ligand internalization and activation of MAPK signaling pathway. Required for regulation of CXCR4 protein levels in migrating interneurons, thereby adapting their chemokine responsiveness. In glioma cells, transduces signals via MEK/ERK pathway, mediating resistance to apoptosis. Promotes cell growth and survival. Not involved in cell migration, adhesion or proliferation of normal hematopoietic progenitors but activated by CXCL11 in malignant hemapoietic cells, leading to phosphorylation of ERK1/2 (MAPK3/MAPK1) and enhanced cell adhesion and migration. Plays a regulatory role in CXCR4-mediated activation of cell surface integrins by CXCL12. Required for heart valve development. Regulates axon guidance in the oculomotor system through the regulation of CXCL12 levels. In terms of biological role, (Microbial infection) Acts as a coreceptor with CXCR4 for a restricted number of HIV isolates. This Homo sapiens (Human) protein is Atypical chemokine receptor 3.